The following is a 117-amino-acid chain: Ribosome-binding factor A (117 aa).

It belongs to the RbfA family. In terms of assembly, monomer. Binds 30S ribosomal subunits, but not 50S ribosomal subunits or 70S ribosomes.

It is found in the cytoplasm. In terms of biological role, one of several proteins that assist in the late maturation steps of the functional core of the 30S ribosomal subunit. Associates with free 30S ribosomal subunits (but not with 30S subunits that are part of 70S ribosomes or polysomes). Required for efficient processing of 16S rRNA. May interact with the 5'-terminal helix region of 16S rRNA. The sequence is that of Ribosome-binding factor A from Leuconostoc mesenteroides subsp. mesenteroides (strain ATCC 8293 / DSM 20343 / BCRC 11652 / CCM 1803 / JCM 6124 / NCDO 523 / NBRC 100496 / NCIMB 8023 / NCTC 12954 / NRRL B-1118 / 37Y).